Here is a 487-residue protein sequence, read N- to C-terminus: F-box/LRR-repeat protein At1g48400 (487 aa).

In terms of domain architecture, F-box spans 9 to 57 (RDSISNLPDEILGKILSLLPTKVAASTSVLSKRWRNLLGLVDNLCFDES). 6 LRR repeats span residues 71–97 (SLRFCDFVDKTFALLSNSHIKKFSLSR), 125–153 (HLHATPMSFVAIETKLLTSNTLVKLTLSA), 174–199 (SILGDYTNYIRLIDGCPVLEELYMRD), 225–251 (THNPNEMIWHELIYFEAPSLVYLDYSS), 327–358 (TLHLSPDSLEVFHFCCKSMPVFNNLLNLSIES), and 359–384 (NKDKGWQVMPLLLKSCPNLHTLVIKG).

This chain is F-box/LRR-repeat protein At1g48400, found in Arabidopsis thaliana (Mouse-ear cress).